Here is a 133-residue protein sequence, read N- to C-terminus: Small ribosomal subunit protein uS9 (133 aa).

The segment at 94–133 is disordered; that stretch reads SADNRKPLKTEGHLSRDPRAKERRKYGLKKARKAPQFSKR. Over residues 95 to 113 the composition is skewed to basic and acidic residues; that stretch reads ADNRKPLKTEGHLSRDPRA. A compositionally biased stretch (basic residues) spans 114-133; it reads KERRKYGLKKARKAPQFSKR.

This sequence belongs to the universal ribosomal protein uS9 family.

This is Small ribosomal subunit protein uS9 from Synechococcus sp. (strain CC9605).